Consider the following 92-residue polypeptide: Small ribosomal subunit protein uS19c (92 aa).

The protein belongs to the universal ribosomal protein uS19 family.

Its subcellular location is the plastid. Its function is as follows. Protein S19 forms a complex with S13 that binds strongly to the 16S ribosomal RNA. In Cuscuta gronovii (Common dodder), this protein is Small ribosomal subunit protein uS19c.